The following is a 140-amino-acid chain: Putative pre-16S rRNA nuclease (140 aa).

The protein belongs to the YqgF nuclease family.

The protein resides in the cytoplasm. Functionally, could be a nuclease involved in processing of the 5'-end of pre-16S rRNA. The chain is Putative pre-16S rRNA nuclease from Aeromonas salmonicida (strain A449).